A 523-amino-acid chain; its full sequence is Fidgetin-like protein 1 (523 aa).

Residues 114-154 (PVQQAVKSRPEGQFPESRNNSTKKIDAQQYSSESSSQSGFG) form a disordered region. Residues 141–151 (QQYSSESSSQS) are compositionally biased toward low complexity. ATP contacts are provided by residues Ala-253 and 293 to 298 (GTGKTL).

Belongs to the AAA ATPase family. In terms of assembly, hexamer. The cofactor is Mg(2+).

It carries out the reaction ATP + H2O = ADP + phosphate + H(+). The sequence is that of Fidgetin-like protein 1 from Drosophila melanogaster (Fruit fly).